Consider the following 497-residue polypeptide: Proline--tRNA ligase (497 aa).

Belongs to the class-II aminoacyl-tRNA synthetase family. ProS type 3 subfamily. In terms of assembly, homodimer.

The protein resides in the cytoplasm. The catalysed reaction is tRNA(Pro) + L-proline + ATP = L-prolyl-tRNA(Pro) + AMP + diphosphate. In terms of biological role, catalyzes the attachment of proline to tRNA(Pro) in a two-step reaction: proline is first activated by ATP to form Pro-AMP and then transferred to the acceptor end of tRNA(Pro). The protein is Proline--tRNA ligase of Deinococcus geothermalis (strain DSM 11300 / CIP 105573 / AG-3a).